Here is a 291-residue protein sequence, read N- to C-terminus: Glycinyltransferase (291 aa).

Glu-243 is a catalytic residue.

It belongs to the thymidine aminotransferase family.

The catalysed reaction is 5-phosphomethyl-dUMP in DNA + glycine = 5-N(alpha)-glycyl-dTMP in DNA + phosphate. In terms of biological role, transfers glycine to 5-phosphomethyl-2'-deoxyuridine (5-PmdU) to produce 5-Nalpha-glycinylthymidine (Nalpha-GlyT) as a step in the pathway leading to thymidine hypermodifications in the viral genome. As a final result of the pathway of hypermodification, 5-aminoethyl-2'-deoxyuridine (5-NedU) substitutes for about 30% of thymidines in the viral DNA. These modifications probably prevent degradation of viral genome by the host restriction-modification antiviral defense system. The chain is Glycinyltransferase from Pseudomonas phage M6.